The sequence spans 129 residues: Histone H2A.J (129 aa).

The disordered stretch occupies residues 1-22 (MSGRGKQGGKVRAKAKSRSSRA). Lys-6 and Lys-10 each carry N6-acetyllysine. Over residues 7–19 (QGGKVRAKAKSRS) the composition is skewed to basic residues. N6-lactoyllysine; alternate is present on Lys-10. Gln-105 carries the post-translational modification N5-methylglutamine. Thr-121 is modified (phosphothreonine; by DCAF1).

It belongs to the histone H2A family. The nucleosome is a histone octamer containing two molecules each of H2A, H2B, H3 and H4 assembled in one H3-H4 heterotetramer and two H2A-H2B heterodimers. The octamer wraps approximately 147 bp of DNA. Post-translationally, monoubiquitination of Lys-120 (H2AXK119ub) gives a specific tag for epigenetic transcriptional repression. Following DNA double-strand breaks (DSBs), it is ubiquitinated through 'Lys-63' linkage of ubiquitin moieties. In terms of processing, glutamine methylation at Gln-105 (H2AQ104me) by FBL is specifically dedicated to polymerase I. It is present at 35S ribosomal DNA locus and impairs binding of the FACT complex. Phosphorylation on Ser-2 (H2AS1ph) is enhanced during mitosis. Phosphorylation on Ser-2 by RPS6KA5/MSK1 directly represses transcription. Acetylation of H3 inhibits Ser-2 phosphorylation by RPS6KA5/MSK1. Phosphorylation at Thr-121 (H2AT120ph) by DCAF1 is present in the regulatory region of many tumor suppresor genes and down-regulates their transcription.

Its subcellular location is the nucleus. It localises to the chromosome. Functionally, core component of nucleosome. Nucleosomes wrap and compact DNA into chromatin, limiting DNA accessibility to the cellular machineries which require DNA as a template. Histones thereby play a central role in transcription regulation, DNA repair, DNA replication and chromosomal stability. DNA accessibility is regulated via a complex set of post-translational modifications of histones, also called histone code, and nucleosome remodeling. The protein is Histone H2A.J of Macaca fascicularis (Crab-eating macaque).